A 466-amino-acid polypeptide reads, in one-letter code: GTP cyclohydrolase 1 (466 aa).

Zn(2+) is bound by residues Cys342, His345, and Cys416.

It belongs to the GTP cyclohydrolase I family. As to quaternary structure, homodimer.

It carries out the reaction GTP + H2O = 7,8-dihydroneopterin 3'-triphosphate + formate + H(+). It functions in the pathway cofactor biosynthesis; 7,8-dihydroneopterin triphosphate biosynthesis; 7,8-dihydroneopterin triphosphate from GTP: step 1/1. GTP cyclohydrolase 1 is the first enzyme in the biosynthetic pathway leading to folic acid. This Arabidopsis thaliana (Mouse-ear cress) protein is GTP cyclohydrolase 1 (GCH1).